The chain runs to 449 residues: Asparagine--tRNA ligase (449 aa).

The protein belongs to the class-II aminoacyl-tRNA synthetase family. In terms of assembly, homodimer.

The protein localises to the cytoplasm. It catalyses the reaction tRNA(Asn) + L-asparagine + ATP = L-asparaginyl-tRNA(Asn) + AMP + diphosphate + H(+). The sequence is that of Asparagine--tRNA ligase from Desulfotalea psychrophila (strain LSv54 / DSM 12343).